A 1493-amino-acid polypeptide reads, in one-letter code: Mitogen-activated protein kinase kinase kinase 1 (1493 aa).

The segment covering 1 to 23 (MAAAAGDRASSSGFPGAAAASPE) has biased composition (low complexity). Disordered stretches follow at residues 1–178 (MAAA…PEER) and 194–300 (HEWL…EETS). Ala2 carries the N-acetylalanine modification. Ser21 bears the Phosphoserine mark. Residues 24–35 (AGGGGGGGGALQ) are compositionally biased toward gly residues. Low complexity predominate over residues 36 to 46 (GSGAPAAGAAG). The segment covering 89–99 (PPCPSTSPSPE) has biased composition (pro residues). Residues 140–156 (ARSPAGAEPPSAAAPSG) are compositionally biased toward low complexity. Ser142 carries the post-translational modification Phosphoserine. Over residues 157–178 (REMENKETLKGLHKMEDRPEER) the composition is skewed to basic and acidic residues. Low complexity predominate over residues 235 to 256 (SAAPAPKGRRSPSPGSSPSGRS). Ser270 is subject to Phosphoserine. Thr280 carries the phosphothreonine modification. A phosphoserine mark is found at Ser287, Ser292, and Ser295. Residues 333 to 361 (YRVFIGPQNCSCGRGAFCIHLLFVMLRVF) form an SWIM-type zinc finger. Over residues 411 to 428 (SNSHTLSSSSTSTSSSEN) the composition is skewed to low complexity. A disordered region spans residues 411 to 431 (SNSHTLSSSSTSTSSSENSIK). The RING-type zinc finger occupies 438 to 487 (CPICLLGMLDEESLTVCEDGCRNKLHHHCMSIWAEECRRNREPLICPLCR). Phosphoserine is present on residues Ser502 and Ser526. Disordered regions lie at residues 506–531 (SPAS…RRNQ) and 895–914 (EHTV…RLSA). Over residues 512-527 (AVQQPSSPQQPVAGSQ) the composition is skewed to low complexity. Ser915 carries the post-translational modification Phosphoserine. Disordered regions lie at residues 927 to 957 (SVGL…LNSS) and 992 to 1066 (PCKI…TLDL). Over residues 998–1013 (ASPQTQRKFSLQFQRN) the composition is skewed to polar residues. Phosphoserine occurs at positions 999 and 1024. The segment covering 1049–1063 (GSTSKLGDATKSSMT) has biased composition (polar residues). The Protein kinase domain occupies 1224 to 1489 (WLKGQQIGLG…SRELLKHPVF (266 aa)). ATP contacts are provided by residues 1230–1238 (IGLGAFSSC) and Lys1253. Asp1350 acts as the Proton acceptor in catalysis. Thr1381 and Thr1393 each carry phosphothreonine; by autocatalysis.

The protein belongs to the protein kinase superfamily. STE Ser/Thr protein kinase family. MAP kinase kinase kinase subfamily. As to quaternary structure, binds both upstream activators and downstream substrates in multimolecular complexes through its N-terminus. Oligomerizes after binding MAP4K2 or TRAF2. Interacts with AXIN1. Interacts (via the kinase catalytic domain) with STK38. Interacts with GRIPAP1. Requires Mg(2+) as cofactor. In terms of processing, autophosphorylated. As to expression, highly expressed in the heart and spleen while a lower level expression is seen in the liver.

The enzyme catalyses L-seryl-[protein] + ATP = O-phospho-L-seryl-[protein] + ADP + H(+). The catalysed reaction is L-threonyl-[protein] + ATP = O-phospho-L-threonyl-[protein] + ADP + H(+). With respect to regulation, activated by autophosphorylation on Thr-1381 and Thr-1393 following oligomerization. Functionally, component of a protein kinase signal transduction cascade. Activates the ERK and JNK kinase pathways by phosphorylation of MAP2K1 and MAP2K4. May phosphorylate the MAPK8/JNK1 kinase. Activates CHUK and IKBKB, the central protein kinases of the NF-kappa-B pathway. This is Mitogen-activated protein kinase kinase kinase 1 (Map3k1) from Mus musculus (Mouse).